The sequence spans 198 residues: Nucleoside triphosphate pyrophosphatase (198 aa).

Aspartate 75 acts as the Proton acceptor in catalysis.

The protein belongs to the Maf family. A divalent metal cation is required as a cofactor.

Its subcellular location is the cytoplasm. The catalysed reaction is a ribonucleoside 5'-triphosphate + H2O = a ribonucleoside 5'-phosphate + diphosphate + H(+). The enzyme catalyses a 2'-deoxyribonucleoside 5'-triphosphate + H2O = a 2'-deoxyribonucleoside 5'-phosphate + diphosphate + H(+). In terms of biological role, nucleoside triphosphate pyrophosphatase. May have a dual role in cell division arrest and in preventing the incorporation of modified nucleotides into cellular nucleic acids. The sequence is that of Nucleoside triphosphate pyrophosphatase from Hyphomonas neptunium (strain ATCC 15444).